Here is a 426-residue protein sequence, read N- to C-terminus: Serine hydroxymethyltransferase (426 aa).

Residues leucine 115 and 119 to 121 (GHI) each bind (6S)-5,6,7,8-tetrahydrofolate. Lysine 225 is modified (N6-(pyridoxal phosphate)lysine).

It belongs to the SHMT family. Homodimer. The cofactor is pyridoxal 5'-phosphate.

Its subcellular location is the cytoplasm. It functions in the pathway amino-acid biosynthesis; glycine biosynthesis; glycine from L-serine: step 1/1. Its function is as follows. Catalyzes the reversible interconversion of serine and glycine with a modified folate serving as the one-carbon carrier. Also exhibits a pteridine-independent aldolase activity toward beta-hydroxyamino acids, producing glycine and aldehydes, via a retro-aldol mechanism. The chain is Serine hydroxymethyltransferase from Thermoplasma volcanium (strain ATCC 51530 / DSM 4299 / JCM 9571 / NBRC 15438 / GSS1).